Consider the following 870-residue polypeptide: Probable coatomer subunit gamma (870 aa).

HEAT repeat units follow at residues 60–97, 99–133, 168–205, 278–315, 316–350, and 389–425; these read TEAT…VSDD, IIVT…TGML, EVVR…NDRL, SEIQ…AHPN, AVMS…GAES, and HTVM…ENPD.

Belongs to the COPG family. Oligomeric complex that consists of at least the alpha, beta, beta', gamma, delta, epsilon and zeta subunits.

The protein localises to the cytoplasm. It is found in the golgi apparatus membrane. The protein resides in the cytoplasmic vesicle. It localises to the COPI-coated vesicle membrane. Its function is as follows. The coatomer is a cytosolic protein complex that binds to dilysine motifs and reversibly associates with Golgi non-clathrin-coated vesicles, which further mediate biosynthetic protein transport from the ER, via the Golgi up to the trans Golgi network. Coatomer complex is required for budding from Golgi membranes, and is essential for the retrograde Golgi-to-ER transport of dilysine-tagged proteins. In Caenorhabditis elegans, this protein is Probable coatomer subunit gamma.